The chain runs to 371 residues: MQIQNNNYKGLIPPYILQNIYKNTSESEKDNVLMTLNHTQSLMLDSVIKTSDSIDNTDDEVVSDTLHRSIYDAKNETKLPGTLVRDEGDPDNGDVAVDNAYKYLEATYNFYKEVFNRNSLDDKGMKLIATVHYGKEYMNAYWGRGQMVFGDGDGKVFNNFTTSIDVIGHELSHGVIEKTADLIYFFQSGALNESIADVFGSLVRQHYLKQKADEASWVVGEELLAKGIKGVGIRSMKEPGKAYDDPLLGKNPQPGHMDDFKDYPIYRDNGGVHVNSGIPNKAFYNLAIKLGGYAWEKAGKIWYNTLLDKDLARDTTFLSFAKLTVKHARDLFDEDVEKATIDSWKEVGIKVKEEDKDKGKDEGKDKAETKV.

His-169 contributes to the Zn(2+) binding site. Residue Glu-170 is part of the active site. Positions 173 and 193 each coordinate Zn(2+). His-273 acts as the Proton donor in catalysis. The tract at residues 352-371 is disordered; sequence KEEDKDKGKDEGKDKAETKV.

It belongs to the peptidase M4 family. Zn(2+) is required as a cofactor.

The protein localises to the secreted. Inhibited by 8 mM 1,10-phenanthroline, but not by EDTA or PMSF. Metalloprotease involved in the inhibition of insect antibacterial peptides. Reduces the antibacterial activity of G.mellonella hemolymph by 50%. Reduces the antibacterial activity of cecropin A by 80% and completely inhibits cecropin B. This Photorhabdus sp. (strain Az29) protein is Protease PrtS.